Reading from the N-terminus, the 541-residue chain is CTP synthase (541 aa).

The amidoligase domain stretch occupies residues Met1 to Leu268. A CTP-binding site is contributed by Ser13. A UTP-binding site is contributed by Ser13. ATP-binding positions include Gly14 to Ile19 and Asp71. Residues Asp71 and Glu141 each coordinate Mg(2+). Residues Asp148 to Glu150, Lys189 to Gln194, and Lys225 contribute to the CTP site. UTP contacts are provided by residues Lys189 to Gln194 and Lys225. A Glutamine amidotransferase type-1 domain is found at Glu293–Gly539. Residue Gly359 coordinates L-glutamine. The Nucleophile; for glutamine hydrolysis role is filled by Cys386. L-glutamine is bound by residues Met387 to Gln390, Glu410, and Arg467. Catalysis depends on residues His512 and Glu514.

This sequence belongs to the CTP synthase family. Homotetramer.

The enzyme catalyses UTP + L-glutamine + ATP + H2O = CTP + L-glutamate + ADP + phosphate + 2 H(+). The catalysed reaction is L-glutamine + H2O = L-glutamate + NH4(+). It carries out the reaction UTP + NH4(+) + ATP = CTP + ADP + phosphate + 2 H(+). It functions in the pathway pyrimidine metabolism; CTP biosynthesis via de novo pathway; CTP from UDP: step 2/2. Its activity is regulated as follows. Allosterically activated by GTP, when glutamine is the substrate; GTP has no effect on the reaction when ammonia is the substrate. The allosteric effector GTP functions by stabilizing the protein conformation that binds the tetrahedral intermediate(s) formed during glutamine hydrolysis. Inhibited by the product CTP, via allosteric rather than competitive inhibition. Functionally, catalyzes the ATP-dependent amination of UTP to CTP with either L-glutamine or ammonia as the source of nitrogen. Regulates intracellular CTP levels through interactions with the four ribonucleotide triphosphates. In Symbiobacterium thermophilum (strain DSM 24528 / JCM 14929 / IAM 14863 / T), this protein is CTP synthase.